Consider the following 2122-residue polypeptide: Unique GC organizer UGO (2122 aa).

5 helical membrane passes run 19 to 39 (FAVA…TNSL), 50 to 70 (LFGM…FVIV), 82 to 102 (TYIM…MQLI), 115 to 135 (VLTF…VLIG), and 145 to 165 (VVCS…DVGL). Disordered regions lie at residues 337-403 (AALH…HRSA), 422-532 (FRGL…GPFV), 565-591 (DLRE…SGLQ), 627-762 (HRRG…GRAN), 785-815 (HAAS…CSAS), 848-870 (MSRR…RAER), 903-949 (SKEG…ASAN), 999-1046 (RNET…LHSR), 1068-1308 (PSDL…HEAV), 1328-1368 (AGLS…SEEE), 1515-1540 (ANSS…AASA), 1560-1608 (AAEH…TPHT), and 1639-1727 (QGLG…TFFG). Positions 363–374 (RSNTLRGCSGQV) are enriched in polar residues. 3 stretches are compositionally biased toward basic and acidic residues: residues 503–525 (LRMD…DPAK), 565–585 (DLRE…HAAA), and 632–645 (GARD…RGEP). The segment covering 672–687 (RLSRSRRHKTRTYRRG) has biased composition (basic residues). Residues 690–699 (SDGTTAGTSD) are compositionally biased toward low complexity. The span at 707–720 (LEDEGSDSGQESES) shows a compositional bias: acidic residues. Positions 725–735 (RRRMRSSRNRR) are enriched in basic residues. A compositionally biased stretch (low complexity) spans 741-750 (EDSSSGTSVR). The segment covering 751–760 (SEGRHCREGR) has biased composition (basic and acidic residues). Asparagine 762 carries N-linked (GlcNAc...) asparagine glycosylation. Basic residues predominate over residues 848–860 (MSRRRRREGKSRP). Composition is skewed to polar residues over residues 999-1011 (RNET…SPAT) and 1072-1097 (SLFT…SARI). An N-linked (GlcNAc...) asparagine glycan is attached at asparagine 1000. The N-linked (GlcNAc...) asparagine glycan is linked to asparagine 1165. Residues 1220 to 1261 (SREDLVGEADSHVSPEKEVFVSSRREKREEQVPRSRREERRD) are compositionally biased toward basic and acidic residues. Residues 1262-1276 (RRGRRWRRGRRRRKA) show a composition bias toward basic residues. 2 stretches are compositionally biased toward basic and acidic residues: residues 1277–1289 (RECS…RDSS) and 1345–1359 (GDMR…HSDG). A compositionally biased stretch (polar residues) spans 1515 to 1527 (ANSSTAVSSSLPD). Asparagine 1516 carries an N-linked (GlcNAc...) asparagine glycan. 2 stretches are compositionally biased toward low complexity: residues 1528-1540 (STAW…AASA) and 1597-1608 (TQTPQTPQTPHT). Polar residues predominate over residues 1684-1693 (LSATPSTRLQ). The next 5 helical transmembrane spans lie at 1859 to 1879 (VAWL…LLRL), 1956 to 1976 (MLAL…WHLI), 1989 to 2009 (IIPA…ILAV), 2017 to 2037 (IFLL…PPGV), and 2040 to 2060 (VQLF…GQLF). Residues 2102 to 2122 (DEGSEDEVSMGSGHLVGDRSA) form a disordered region.

As to quaternary structure, interacts with guanylate cyclase GC; the interaction regulates guanylate cyclase GC trafficking and catalytic activity.

The protein localises to the cell membrane. In terms of biological role, in tachyzoites, required for the cellular trafficking of guanylate cyclase GC to the cell membrane and for GC guanylate cyclase activity. This Toxoplasma gondii (strain ATCC 50853 / GT1) protein is Unique GC organizer UGO.